Reading from the N-terminus, the 132-residue chain is MAAGMKAKRSRRRKERKNVEHGCAHIKSTFNNSIVTITDSVGNTLSWASAGGLGFRGSRKSTPFAAQMAAETAAKAAMEHGLKSIEVYVKGPGSGREAAIRSLQAAGLEVTLIKDVTPIPHNGCRPPKRRRV.

It belongs to the universal ribosomal protein uS11 family. In terms of assembly, part of the 30S ribosomal subunit. Interacts with proteins S7 and S18. Binds to IF-3.

In terms of biological role, located on the platform of the 30S subunit, it bridges several disparate RNA helices of the 16S rRNA. Forms part of the Shine-Dalgarno cleft in the 70S ribosome. The sequence is that of Small ribosomal subunit protein uS11 from Clostridium botulinum (strain 657 / Type Ba4).